A 144-amino-acid polypeptide reads, in one-letter code: Effector EagT6 (144 aa).

As to quaternary structure, homodimer. Two dimers interact with Tse6; this interaction is crucial for Tse6 loading onto VgrG1a.

Its function is as follows. Plays an essential role in toxin Tse6 delivery to target cells and specifically in the loading of Tse6 onto VgrG1a. The protein is Effector EagT6 of Pseudomonas aeruginosa (strain ATCC 15692 / DSM 22644 / CIP 104116 / JCM 14847 / LMG 12228 / 1C / PRS 101 / PAO1).